The sequence spans 296 residues: MLKDEYGRVVTNLRIAVTKKCNLRCFYCHKEGESNPGEEISAERIVEIARAFKELGVRKLKITGGEPLLRKDLPDIILNLPEFEEISMTTNGILLEKYAEELRECGLSRVNVSLDTLDAEKYRWITGGGEVQKVVNGIEKACEVGLTPVKINMLVLGGVNDNEVDELLEFTNSFNRGNTKAILQVIELVPFPGFEKYFFDISTIEEKYARMATQRRVRAMHRRTQYFTPKGVIEFVKPMDNTAFCMHCNRMRVTSDGKLKPCLLRNETITIDGKHGEELARAIIETVRKREPYFKG.

The 226-residue stretch at 5 to 230 (EYGRVVTNLR…HRRTQYFTPK (226 aa)) folds into the Radical SAM core domain. Position 14 (Arg14) interacts with GTP. Residues Cys21 and Cys25 each coordinate [4Fe-4S] cluster. Tyr27 contacts S-adenosyl-L-methionine. Cys28 serves as a coordination point for [4Fe-4S] cluster. Position 61 (Lys61) interacts with GTP. Gly65 is a binding site for S-adenosyl-L-methionine. Thr89 provides a ligand contact to GTP. S-adenosyl-L-methionine is bound at residue Ser113. Lys150 contacts GTP. [4Fe-4S] cluster is bound by residues Cys245 and Cys248. A GTP-binding site is contributed by 250 to 252 (RMR). Cys262 is a binding site for [4Fe-4S] cluster.

It belongs to the radical SAM superfamily. MoaA family. [4Fe-4S] cluster serves as cofactor.

The enzyme catalyses GTP + AH2 + S-adenosyl-L-methionine = (8S)-3',8-cyclo-7,8-dihydroguanosine 5'-triphosphate + 5'-deoxyadenosine + L-methionine + A + H(+). The protein operates within cofactor biosynthesis; molybdopterin biosynthesis. Functionally, catalyzes the cyclization of GTP to (8S)-3',8-cyclo-7,8-dihydroguanosine 5'-triphosphate. In Archaeoglobus fulgidus (strain ATCC 49558 / DSM 4304 / JCM 9628 / NBRC 100126 / VC-16), this protein is Probable GTP 3',8-cyclase.